The following is a 304-amino-acid chain: Non-specific ribonucleoside hydrolase RihC (304 aa).

His233 is a catalytic residue.

Belongs to the IUNH family. RihC subfamily.

In terms of biological role, hydrolyzes both purine and pyrimidine ribonucleosides with a broad-substrate specificity. This is Non-specific ribonucleoside hydrolase RihC from Escherichia coli (strain SMS-3-5 / SECEC).